The following is a 158-amino-acid chain: Large ribosomal subunit protein eL24 (158 aa).

The segment covering 98–146 (LDASHKKAEAEKAVRELKQKKANDIEKKRADRKLQGKDVKAAKKAETKK) has biased composition (basic and acidic residues). The tract at residues 98 to 158 (LDASHKKAEA…QPVGAKGGKK (61 aa)) is disordered.

This sequence belongs to the eukaryotic ribosomal protein eL24 family.

The polypeptide is Large ribosomal subunit protein eL24 (RPL24) (Tetrahymena thermophila (strain SB210)).